Reading from the N-terminus, the 53-residue chain is MNKLNSNAVVSLNEVSDSELDTILGGNRWWQGVVPTVSYECRMNSWQHVFTCC.

A propeptide spanning residues 1-26 is cleaved from the precursor; it reads MNKLNSNAVVSLNEVSDSELDTILGG. Residues 36-41 constitute a cross-link (beta-methyllanthionine (Thr-Cys)); sequence TVSYEC. 2 cross-links (lanthionine (Ser-Cys)) span residues 38 to 52 and 45 to 53; these read SYEC…VFTC and SWQHVFTCC. The residue at position 51 (Thr-51) is a 2,3-didehydrobutyrine.

Post-translationally, maturation of lantibiotics involves the enzymatic conversion of Thr, and Ser into dehydrated AA and the formation of thioether bonds with cysteine. This is followed by membrane translocation and cleavage of the modified precursor. It is not established whether the 2,3-didehydrobutyrine is the E- or Z-isomer.

In terms of biological role, lanthionine-containing peptide antibiotic (lantibiotic) active on Gram-positive bacteria including M.luteus, S.aureus, Streptococcus, P.micros, P.acidilactici, C.sporogenes, C.diphtheriae, A.viscosus, G.vaginalis, P.acnes, L.monocytogenes and M.smegmatis, and Gram-negative bacteria including C.jejuni, H.pylori and N.gonorrhoeae. Transiently and partially depolarizes the transmembrane electrical potential and pH gradient of susceptible cells, inhibits the uptake of amino acids and depletes the intracellular ATP pool. The polypeptide is Lantibiotic mutacin-2 (Streptococcus mutans).